The following is a 378-amino-acid chain: Acetylornithine deacetylase (378 aa).

Residue His-76 participates in Zn(2+) binding. The active site involves Asp-78. Residue Asp-108 coordinates Zn(2+). Glu-140 is an active-site residue. Zn(2+) is bound by residues Glu-141, Glu-165, and His-351.

The protein belongs to the peptidase M20A family. ArgE subfamily. Homodimer. The cofactor is Zn(2+). Co(2+) is required as a cofactor. Requires glutathione as cofactor.

The protein localises to the cytoplasm. It catalyses the reaction N(2)-acetyl-L-ornithine + H2O = L-ornithine + acetate. Its pathway is amino-acid biosynthesis; L-arginine biosynthesis; L-ornithine from N(2)-acetyl-L-ornithine (linear): step 1/1. Its function is as follows. Catalyzes the hydrolysis of the amide bond of N(2)-acetylated L-amino acids. Cleaves the acetyl group from N-acetyl-L-ornithine to form L-ornithine, an intermediate in L-arginine biosynthesis pathway, and a branchpoint in the synthesis of polyamines. In Vibrio atlanticus (strain LGP32) (Vibrio splendidus (strain Mel32)), this protein is Acetylornithine deacetylase.